The chain runs to 219 residues: UPF0502 protein Ppro_2903 (219 aa).

Belongs to the UPF0502 family.

The polypeptide is UPF0502 protein Ppro_2903 (Pelobacter propionicus (strain DSM 2379 / NBRC 103807 / OttBd1)).